The chain runs to 518 residues: 3-phosphoshikimate 1-carboxyvinyltransferase 1, chloroplastic (518 aa).

The N-terminal 74 residues, 1 to 74 (MAQISSMGQG…RISASVVTAQ (74 aa)), are a transit peptide targeting the chloroplast. 3-phosphoshikimate-binding residues include Lys-97, Ser-98, and Arg-102. Residue Lys-97 coordinates phosphoenolpyruvate. 2 residues coordinate phosphoenolpyruvate: Gly-175 and Arg-205. Residues Ser-252, Ser-253, Gln-254, Ser-280, Asp-405, and Lys-432 each coordinate 3-phosphoshikimate. Gln-254 is a phosphoenolpyruvate binding site. The Proton acceptor role is filled by Asp-405. Residues Arg-436, Arg-478, and Lys-503 each coordinate phosphoenolpyruvate.

This sequence belongs to the EPSP synthase family.

Its subcellular location is the plastid. It localises to the chloroplast. The catalysed reaction is 3-phosphoshikimate + phosphoenolpyruvate = 5-O-(1-carboxyvinyl)-3-phosphoshikimate + phosphate. It functions in the pathway metabolic intermediate biosynthesis; chorismate biosynthesis; chorismate from D-erythrose 4-phosphate and phosphoenolpyruvate: step 6/7. Catalyzes the transfer of the enolpyruvyl moiety of phosphoenolpyruvate (PEP) to the 5-hydroxyl of shikimate-3-phosphate (S3P) to produce enolpyruvyl shikimate-3-phosphate and inorganic phosphate. In Nicotiana tabacum (Common tobacco), this protein is 3-phosphoshikimate 1-carboxyvinyltransferase 1, chloroplastic (EPSPS-1).